A 479-amino-acid polypeptide reads, in one-letter code: GTPase Obg (479 aa).

In terms of domain architecture, Obg spans 2–159; sequence PRFVDRVVIH…RDLTLELKTV (158 aa). One can recognise an OBG-type G domain in the interval 160-340; the sequence is ADVGLVGFPS…LIFGLWQMVS (181 aa). Residues 166–173, 191–195, 212–215, 292–295, and 321–323 contribute to the GTP site; these read GFPSAGKS, FTTLV, DVPG, NKID, and STV. S173 and T193 together coordinate Mg(2+). Residues 358-436 enclose the OCT domain; that stretch reads PVPVDDSGFD…IGEMTFDWEP (79 aa). The interval 438–479 is disordered; sequence TPAGGHVAMSGRGTDVRLERSDRVGAAERKAARRQRRERDDD. Basic and acidic residues predominate over residues 451-467; that stretch reads TDVRLERSDRVGAAERK.

Belongs to the TRAFAC class OBG-HflX-like GTPase superfamily. OBG GTPase family. As to quaternary structure, monomer. The cofactor is Mg(2+).

It is found in the cytoplasm. Its function is as follows. An essential GTPase which binds GTP, GDP and possibly (p)ppGpp with moderate affinity, with high nucleotide exchange rates and a fairly low GTP hydrolysis rate. Plays a role in control of the cell cycle, stress response, ribosome biogenesis and in those bacteria that undergo differentiation, in morphogenesis control. The polypeptide is GTPase Obg (Mycobacterium marinum (strain ATCC BAA-535 / M)).